The following is a 524-amino-acid chain: Glucose-6-phosphate 1-dehydrogenase (524 aa).

S20 bears the Phosphoserine mark. NADP(+) contacts are provided by residues 42–49 (GASGDLAK), R76, and K175. D-glucose 6-phosphate-binding positions include K175, 205–209 (HYLGK), E243, and D262. H267 (proton acceptor) is an active-site residue. R362 contributes to the NADP(+) binding site. D-glucose 6-phosphate is bound by residues K365 and R370. Residues K371, R375, and R398 each contribute to the NADP(+) site. Q400 contributes to the D-glucose 6-phosphate binding site. NADP(+) is bound by residues 406–408 (YFK), 426–428 (DLT), R492, Y508, and W514.

It belongs to the glucose-6-phosphate dehydrogenase family.

Its subcellular location is the cytoplasm. It is found in the cytosol. The catalysed reaction is D-glucose 6-phosphate + NADP(+) = 6-phospho-D-glucono-1,5-lactone + NADPH + H(+). It functions in the pathway carbohydrate degradation; pentose phosphate pathway; D-ribulose 5-phosphate from D-glucose 6-phosphate (oxidative stage): step 1/3. Its function is as follows. Cytosolic glucose-6-phosphate dehydrogenase that catalyzes the first and rate-limiting step of the oxidative branch within the pentose phosphate pathway/shunt, an alternative route to glycolysis for the dissimilation of carbohydrates and a major source of reducing power and metabolic intermediates for fatty acid and nucleic acid biosynthetic processes. The polypeptide is Glucose-6-phosphate 1-dehydrogenase (Drosophila melanogaster (Fruit fly)).